Reading from the N-terminus, the 950-residue chain is Synaptotagmin-like protein 2 (950 aa).

The region spanning 1–57 is the RabBD domain; sequence MIDLSFLTEEEQDAILKVLQRDAALKRAEEERVRHLPEKIKDDQQLKNMSGQWFYEA. 3 disordered regions span residues 78 to 98, 116 to 289, and 361 to 620; these read RKKL…AKES, VEEP…ETLR, and ESDQ…SSSG. The span at 87 to 97 shows a compositional bias: basic and acidic residues; it reads QNKDTAMRAKE. 2 stretches are compositionally biased toward polar residues: residues 140 to 150 and 173 to 183; these read IDMSQESTRTP and LQQTKPEQSKT. A compositionally biased stretch (basic and acidic residues) spans 193-205; it reads KEGELSESKEKSS. Polar residues predominate over residues 219–230; it reads QTVSTEPENASH. Basic and acidic residues predominate over residues 246-264; the sequence is NDLEKDDNQSFPRQRRDSL. Positions 434-445 are enriched in polar residues; sequence VESSSVINGQQE. 2 stretches are compositionally biased toward basic and acidic residues: residues 479 to 502 and 531 to 544; these read HSFR…LERR and ELVR…KADQ. Over residues 557–567 the composition is skewed to polar residues; sequence TVPSLPDNQFS. The segment covering 608–620 has biased composition (low complexity); it reads SPSSLTNLSSSSG. C2 domains lie at 644 to 769 and 784 to 913; these read VKGS…LKWY and NRGE…VDWM.

As to quaternary structure, monomer. Binds NRXN1. Binds RAB27A that has been activated by GTP-binding. Interacts with RAB27B. Isoform 1 is highly susceptible to proteolytic degradation and is stabilized by the interaction with RAB27A. In terms of tissue distribution, highly expressed in brain, lung, kidney, testis and in embryos after day 7. Detected at lower levels in skeletal muscle. Expressed in pancreatic alpha cells. Isoform 6 is highly expressed in brain, but not detectable in the other tissues tested. Isoform 1 is expressed abundantly in the stomach and is predominantly localized at the apical region of gastric-surface mucus cells. Isoform 11 is expressed in cytotoxic T-lymphocytes (CTL).

The protein resides in the melanosome membrane. It is found in the cell membrane. Functionally, isoform 11 acts as a RAB27A effector protein and plays a role in cytotoxic granule exocytosis in lymphocytes. Required for cytotoxic granule docking at the immunologic synapse. Isoform 1 may play a role in melanosome transport and vesicle trafficking. It controls melanosome distribution in the cell periphery and regulates melanocyte morphology. Isoform 1 acts as a positive mediator of mucus secretion by the surface mucus cells of the stomach. Mediates basal mucus secretion by gastric surface cells by promoting the proper granule biognesis and docking of mucus granules with the apical plasma membrane. In Mus musculus (Mouse), this protein is Synaptotagmin-like protein 2 (Sytl2).